The chain runs to 113 residues: Large ribosomal subunit protein bL19 (113 aa).

It belongs to the bacterial ribosomal protein bL19 family.

Its function is as follows. This protein is located at the 30S-50S ribosomal subunit interface and may play a role in the structure and function of the aminoacyl-tRNA binding site. In Mycobacteroides abscessus (strain ATCC 19977 / DSM 44196 / CCUG 20993 / CIP 104536 / JCM 13569 / NCTC 13031 / TMC 1543 / L948) (Mycobacterium abscessus), this protein is Large ribosomal subunit protein bL19.